A 401-amino-acid chain; its full sequence is Argininosuccinate synthase (401 aa).

Residues Ala10–Ser18 and Ala38 contribute to the ATP site. Tyr89 contacts L-citrulline. An ATP-binding site is contributed by Gly119. Thr121, Asn125, and Asp126 together coordinate L-aspartate. Asn125 contacts L-citrulline. L-citrulline is bound by residues Arg129, Ser177, Ser186, Glu262, and Tyr274.

Belongs to the argininosuccinate synthase family. Type 1 subfamily. Homotetramer.

The protein localises to the cytoplasm. It catalyses the reaction L-citrulline + L-aspartate + ATP = 2-(N(omega)-L-arginino)succinate + AMP + diphosphate + H(+). The protein operates within amino-acid biosynthesis; L-arginine biosynthesis; L-arginine from L-ornithine and carbamoyl phosphate: step 2/3. The sequence is that of Argininosuccinate synthase from Prochlorococcus marinus (strain MIT 9303).